A 157-amino-acid polypeptide reads, in one-letter code: ATP synthase subunit b (157 aa).

The helical transmembrane segment at 1–21 (MHFLDESFWLAISFIIFVYLI) threads the bilayer.

This sequence belongs to the ATPase B chain family. F-type ATPases have 2 components, F(1) - the catalytic core - and F(0) - the membrane proton channel. F(1) has five subunits: alpha(3), beta(3), gamma(1), delta(1), epsilon(1). F(0) has three main subunits: a(1), b(2) and c(10-14). The alpha and beta chains form an alternating ring which encloses part of the gamma chain. F(1) is attached to F(0) by a central stalk formed by the gamma and epsilon chains, while a peripheral stalk is formed by the delta and b chains.

It is found in the cell inner membrane. F(1)F(0) ATP synthase produces ATP from ADP in the presence of a proton or sodium gradient. F-type ATPases consist of two structural domains, F(1) containing the extramembraneous catalytic core and F(0) containing the membrane proton channel, linked together by a central stalk and a peripheral stalk. During catalysis, ATP synthesis in the catalytic domain of F(1) is coupled via a rotary mechanism of the central stalk subunits to proton translocation. In terms of biological role, component of the F(0) channel, it forms part of the peripheral stalk, linking F(1) to F(0). In Rickettsia bellii (strain RML369-C), this protein is ATP synthase subunit b.